A 268-amino-acid chain; its full sequence is 4-hydroxy-tetrahydrodipicolinate reductase (268 aa).

NAD(+)-binding positions include 10–15 (GASGRM) and aspartate 36. An NADP(+)-binding site is contributed by arginine 37. NAD(+) contacts are provided by residues 99 to 101 (GTT) and 123 to 126 (SANM). The Proton donor/acceptor role is filled by histidine 156. Histidine 157 lines the (S)-2,3,4,5-tetrahydrodipicolinate pocket. Lysine 160 functions as the Proton donor in the catalytic mechanism. 166 to 167 (GT) is a binding site for (S)-2,3,4,5-tetrahydrodipicolinate.

Belongs to the DapB family.

The protein resides in the cytoplasm. The catalysed reaction is (S)-2,3,4,5-tetrahydrodipicolinate + NAD(+) + H2O = (2S,4S)-4-hydroxy-2,3,4,5-tetrahydrodipicolinate + NADH + H(+). The enzyme catalyses (S)-2,3,4,5-tetrahydrodipicolinate + NADP(+) + H2O = (2S,4S)-4-hydroxy-2,3,4,5-tetrahydrodipicolinate + NADPH + H(+). Its pathway is amino-acid biosynthesis; L-lysine biosynthesis via DAP pathway; (S)-tetrahydrodipicolinate from L-aspartate: step 4/4. Functionally, catalyzes the conversion of 4-hydroxy-tetrahydrodipicolinate (HTPA) to tetrahydrodipicolinate. The protein is 4-hydroxy-tetrahydrodipicolinate reductase of Burkholderia thailandensis (strain ATCC 700388 / DSM 13276 / CCUG 48851 / CIP 106301 / E264).